A 291-amino-acid chain; its full sequence is Pyridoxal 5'-phosphate synthase subunit PdxS (291 aa).

Asp-23 is a binding site for D-ribose 5-phosphate. Lys-80 (schiff-base intermediate with D-ribose 5-phosphate) is an active-site residue. A D-ribose 5-phosphate-binding site is contributed by Gly-152. Residue Arg-164 participates in D-glyceraldehyde 3-phosphate binding. D-ribose 5-phosphate is bound by residues Gly-213 and 234 to 235 (GS).

It belongs to the PdxS/SNZ family. As to quaternary structure, in the presence of PdxT, forms a dodecamer of heterodimers.

It catalyses the reaction aldehydo-D-ribose 5-phosphate + D-glyceraldehyde 3-phosphate + L-glutamine = pyridoxal 5'-phosphate + L-glutamate + phosphate + 3 H2O + H(+). It functions in the pathway cofactor biosynthesis; pyridoxal 5'-phosphate biosynthesis. In terms of biological role, catalyzes the formation of pyridoxal 5'-phosphate from ribose 5-phosphate (RBP), glyceraldehyde 3-phosphate (G3P) and ammonia. The ammonia is provided by the PdxT subunit. Can also use ribulose 5-phosphate and dihydroxyacetone phosphate as substrates, resulting from enzyme-catalyzed isomerization of RBP and G3P, respectively. The sequence is that of Pyridoxal 5'-phosphate synthase subunit PdxS from Bifidobacterium adolescentis (strain ATCC 15703 / DSM 20083 / NCTC 11814 / E194a).